Reading from the N-terminus, the 209-residue chain is Uracil phosphoribosyltransferase (209 aa).

5-phospho-alpha-D-ribose 1-diphosphate contacts are provided by residues Arg79, Arg104, and 131 to 139 (DPMLATGGS). Uracil is bound by residues Ile194 and 199 to 201 (GDA). 5-phospho-alpha-D-ribose 1-diphosphate is bound at residue Asp200.

The protein belongs to the UPRTase family. The cofactor is Mg(2+).

It carries out the reaction UMP + diphosphate = 5-phospho-alpha-D-ribose 1-diphosphate + uracil. It participates in pyrimidine metabolism; UMP biosynthesis via salvage pathway; UMP from uracil: step 1/1. Its activity is regulated as follows. Allosterically activated by GTP. Its function is as follows. Catalyzes the conversion of uracil and 5-phospho-alpha-D-ribose 1-diphosphate (PRPP) to UMP and diphosphate. The chain is Uracil phosphoribosyltransferase from Brevibacillus brevis (strain 47 / JCM 6285 / NBRC 100599).